The chain runs to 191 residues: Elongation factor P-like protein (191 aa).

Belongs to the elongation factor P family.

This is Elongation factor P-like protein from Photobacterium profundum (strain SS9).